The chain runs to 372 residues: Mevalonate 3,5-bisphosphate decarboxylase (372 aa).

The protein belongs to the mevalonate 3,5-bisphosphate decarboxylase family. Homodimer.

It carries out the reaction (R)-3,5-bisphosphomevalonate + H(+) = isopentenyl phosphate + phosphate + CO2. It participates in isoprenoid biosynthesis; isopentenyl diphosphate biosynthesis via mevalonate pathway. Catalyzes the ATP-independent decarboxylation of (R)-mevalonate 3,5-bisphosphate to isopentenyl phosphate. Functions in an alternative mevalonate pathway, only present in extreme acidophiles of the Thermoplasmatales order, which passes through mevalonate 3-phosphate rather than mevalonate 5-phosphate. The chain is Mevalonate 3,5-bisphosphate decarboxylase from Thermoplasma volcanium (strain ATCC 51530 / DSM 4299 / JCM 9571 / NBRC 15438 / GSS1).